The following is a 426-amino-acid chain: Diaminobutyrate--2-oxoglutarate transaminase (426 aa).

The residue at position 274 (K274) is an N6-(pyridoxal phosphate)lysine.

Belongs to the class-III pyridoxal-phosphate-dependent aminotransferase family. Requires pyridoxal 5'-phosphate as cofactor.

The enzyme catalyses L-2,4-diaminobutanoate + 2-oxoglutarate = L-aspartate 4-semialdehyde + L-glutamate. Its pathway is amine and polyamine biosynthesis; ectoine biosynthesis; L-ectoine from L-aspartate 4-semialdehyde: step 1/3. Catalyzes reversively the conversion of L-aspartate beta-semialdehyde (ASA) to L-2,4-diaminobutyrate (DABA) by transamination with L-glutamate. The protein is Diaminobutyrate--2-oxoglutarate transaminase (ectB) of Oceanobacillus iheyensis (strain DSM 14371 / CIP 107618 / JCM 11309 / KCTC 3954 / HTE831).